Reading from the N-terminus, the 67-residue chain is Prokaryotic ubiquitin-like protein Pup (67 aa).

Low complexity predominate over residues 1 to 13; sequence MAGQEQQQPQSRD. The disordered stretch occupies residues 1–48; the sequence is MAGQEQQQPQSRDSQVDEDIPEAPPAPPEAQASASTEGVDDLLDEIDG. The interval 25-61 is ARC ATPase binding; sequence PAPPEAQASASTEGVDDLLDEIDGVLESNAEEFVRAF. The segment covering 38-48 has biased composition (acidic residues); the sequence is GVDDLLDEIDG. Residue Gln67 is modified to Deamidated glutamine. Gln67 participates in a covalent cross-link: Isoglutamyl lysine isopeptide (Gln-Lys) (interchain with K-? in acceptor proteins).

The protein belongs to the prokaryotic ubiquitin-like protein family. As to quaternary structure, strongly interacts with the proteasome-associated ATPase ARC through a hydrophobic interface; the interacting region of Pup lies in its C-terminal half. There is one Pup binding site per ARC hexamer ring. In terms of processing, is modified by deamidation of its C-terminal glutamine to glutamate by the deamidase Dop, a prerequisite to the subsequent pupylation process.

It participates in protein degradation; proteasomal Pup-dependent pathway. In terms of biological role, protein modifier that is covalently attached to lysine residues of substrate proteins, thereby targeting them for proteasomal degradation. The tagging system is termed pupylation. In Pseudarthrobacter chlorophenolicus (strain ATCC 700700 / DSM 12829 / CIP 107037 / JCM 12360 / KCTC 9906 / NCIMB 13794 / A6) (Arthrobacter chlorophenolicus), this protein is Prokaryotic ubiquitin-like protein Pup.